The primary structure comprises 614 residues: Bifunctional enzyme CysN/CysC (614 aa).

Residues 1 to 441 (MTTLLRLATA…SLVTAQDRPP (441 aa)) form a sulfate adenylyltransferase region. Residues 2-217 (TTLLRLATAG…DVYIAGDRNM (216 aa)) form the tr-type G domain. Residues 11–18 (GSVDDGKS) form a G1 region. Residue 11 to 18 (GSVDDGKS) participates in GTP binding. The tract at residues 67 to 71 (GITID) is G2. Residues 88–91 (DTPG) form a G3 region. Residues 88 to 92 (DTPGH) and 143 to 146 (NKMD) each bind GTP. The tract at residues 143–146 (NKMD) is G4. The segment at 180 to 182 (SAL) is G5. Residues 442 to 614 (RGKTVWFTGL…EVIDLLESSS (173 aa)) are adenylyl-sulfate kinase. 450–457 (GLSGSGKS) contributes to the ATP binding site. Ser-524 functions as the Phosphoserine intermediate in the catalytic mechanism. The tract at residues 578 to 597 (GIDSPYQRPKNPDLRLTPDR) is disordered. Residues 587–597 (KNPDLRLTPDR) are compositionally biased toward basic and acidic residues.

In the C-terminal section; belongs to the APS kinase family. This sequence in the N-terminal section; belongs to the TRAFAC class translation factor GTPase superfamily. Classic translation factor GTPase family. CysN/NodQ subfamily. Heterodimer composed of CysD, the smaller subunit, and CysNC.

The enzyme catalyses sulfate + ATP + H(+) = adenosine 5'-phosphosulfate + diphosphate. It carries out the reaction adenosine 5'-phosphosulfate + ATP = 3'-phosphoadenylyl sulfate + ADP + H(+). Its pathway is sulfur metabolism; hydrogen sulfide biosynthesis; sulfite from sulfate: step 1/3. The protein operates within sulfur metabolism; hydrogen sulfide biosynthesis; sulfite from sulfate: step 2/3. Its function is as follows. With CysD forms the ATP sulfurylase (ATPS) that catalyzes the adenylation of sulfate producing adenosine 5'-phosphosulfate (APS) and diphosphate, the first enzymatic step in sulfur assimilation pathway. APS synthesis involves the formation of a high-energy phosphoric-sulfuric acid anhydride bond driven by GTP hydrolysis by CysN coupled to ATP hydrolysis by CysD. In terms of biological role, APS kinase catalyzes the synthesis of activated sulfate. This chain is Bifunctional enzyme CysN/CysC (cysNC), found in Mycobacterium tuberculosis (strain CDC 1551 / Oshkosh).